Consider the following 201-residue polypeptide: Ribonuclease HII (201 aa).

The 191-residue stretch at 10 to 200 (LIEAGCDEAG…LGDGQLELFS (191 aa)) folds into the RNase H type-2 domain. A divalent metal cation contacts are provided by aspartate 16, glutamate 17, and aspartate 108.

Belongs to the RNase HII family. Mn(2+) serves as cofactor. It depends on Mg(2+) as a cofactor.

It is found in the cytoplasm. It carries out the reaction Endonucleolytic cleavage to 5'-phosphomonoester.. Its function is as follows. Endonuclease that specifically degrades the RNA of RNA-DNA hybrids. The polypeptide is Ribonuclease HII (Bacteroides fragilis (strain YCH46)).